The chain runs to 622 residues: Histone-lysine N-methyltransferase set9 (622 aa).

In terms of domain architecture, SET spans 120-234 (SPFEITTTNR…IGEEITVSYG (115 aa)). 4 disordered regions span residues 262–314 (VPSE…GKFV), 335–394 (QPAG…TTAT), 427–470 (PTTS…RGKP), and 576–622 (DRGV…RMTM). The span at 265–285 (EPQSKASTPALNDDTLSTDSH) shows a compositional bias: polar residues. Positions 376 to 394 (PPSTAANESERSSTSTTAT) are enriched in low complexity. Composition is skewed to polar residues over residues 427–437 (PTTSLRSGSTE) and 446–458 (DQPSTLKQGSIGS). Over residues 590–607 (SEPRTETEGSEGCEDRRT) the composition is skewed to basic and acidic residues. The span at 608–622 (TRASRRRTRSLRMTM) shows a compositional bias: basic residues.

Belongs to the class V-like SAM-binding methyltransferase superfamily. Histone-lysine methyltransferase family. Suvar4-20 subfamily.

The protein resides in the nucleus. It is found in the chromosome. It catalyses the reaction L-lysyl(20)-[histone H4] + 3 S-adenosyl-L-methionine = N(6),N(6),N(6)-trimethyl-L-lysyl(20)-[histone H4] + 3 S-adenosyl-L-homocysteine + 3 H(+). Functionally, histone methyltransferase that trimethylates 'Lys-20' of histone H4 to form H4K20me3. In Aspergillus fumigatus (strain ATCC MYA-4609 / CBS 101355 / FGSC A1100 / Af293) (Neosartorya fumigata), this protein is Histone-lysine N-methyltransferase set9 (set9).